The sequence spans 593 residues: Salivary alpha-glucosidase (593 aa).

An N-terminal signal peptide occupies residues 1-19 (MPPLGVLLLLVALGHSTQG). Residues aspartate 49, aspartate 51, aspartate 53, isoleucine 55, aspartate 57, and asparagine 130 each contribute to the Ca(2+) site. Asparagine 130 and asparagine 163 each carry an N-linked (GlcNAc...) asparagine glycan. Residues aspartate 201, tyrosine 235, leucine 236, and glutamate 238 each coordinate Ca(2+). Asparagine 295, asparagine 310, asparagine 338, asparagine 414, asparagine 445, and asparagine 453 each carry an N-linked (GlcNAc...) asparagine glycan. Residue asparagine 338 participates in N-acetyl-beta-D-glucosamine binding.

This sequence belongs to the glycosyl hydrolase 13 family. Saliva (at protein level). Proximal lateral lobes of the salivary gland (at protein level).

The protein resides in the secreted. The catalysed reaction is Hydrolysis of terminal, non-reducing (1-&gt;4)-linked alpha-D-glucose residues with release of alpha-D-glucose.. Functions as a glucosidase that shows high activity toward sucrose, a major component of nectar. Assists the mosquito in its sugar-feeding capabilities. The chain is Salivary alpha-glucosidase from Anopheles gambiae (African malaria mosquito).